We begin with the raw amino-acid sequence, 81 residues long: CLAVATA3/ESR (CLE)-related protein 5 (81 aa).

The N-terminal stretch at 1–26 is a signal peptide; it reads MATLILKQTLIILLIIFSLQTLSSQA. Proline 73 and proline 76 each carry hydroxyproline. A glycan (O-linked (Ara...) hydroxyproline) is linked at proline 76.

Belongs to the CLV3/ESR signal peptide family. The O-glycosylation (arabinosylation) of the hydroxyproline Pro-76 enhances binding affinity of the CLE5p peptide for its receptor. As to expression, mostly expressed in roots, and, to a lower extent, in seedlings, stems, apex, flowers and siliques.

The protein resides in the secreted. It localises to the extracellular space. Functionally, extracellular signal peptide that regulates cell fate. The chain is CLAVATA3/ESR (CLE)-related protein 5 from Arabidopsis thaliana (Mouse-ear cress).